Consider the following 87-residue polypeptide: uncharacterized protein (87 aa).

Residues 29–49 traverse the membrane as a helical segment; sequence ILWMIIFVVIIAVIIYILISP.

The protein localises to the membrane. This is an uncharacterized protein from Methanocaldococcus jannaschii (strain ATCC 43067 / DSM 2661 / JAL-1 / JCM 10045 / NBRC 100440) (Methanococcus jannaschii).